We begin with the raw amino-acid sequence, 137 residues long: Transcription antitermination protein NusB (137 aa).

Belongs to the NusB family.

Its function is as follows. Involved in transcription antitermination. Required for transcription of ribosomal RNA (rRNA) genes. Binds specifically to the boxA antiterminator sequence of the ribosomal RNA (rrn) operons. In Actinobacillus pleuropneumoniae serotype 5b (strain L20), this protein is Transcription antitermination protein NusB.